The chain runs to 509 residues: MAINPSLLFLSLLFLFNGCLARQTFSSQQSQNECQINRLRASAPQTRIRSEAGTTEWWNPNCQQLRCAGVSVMRQTIEPNGLVLPSFTNAPQLLYIVQGRGIQGIVMPGCAETFQDSQQWQHQSRGRFQDQHQKVRRFRQGDIIALPQGVVHWSYNDGNERVVTINLLDTGNSANQLDNIPRRFHLAGNPEEEQRQLRRLAQQMQGRSERGEESEEEEGEGEEEEEEDNPSRRSRHQEEEEQGRESSSCNNLLCAFDRNFLAQAFNVDHDIIRKIQRVRGNRGTIIRVRDRLQVVTPPRMEEEEREERQQEQRYRHTRGGSQDNGLEETFCSMRIKENLADPERADIFNPQAGRISTLNRFNLPILQRLELSAERGVLYNRAGLIPQWNVNAHKILYMLRGCARVQVVNHNGDAVFDDNVEQGQLLTVPQNFAFMKQAGNEGAEWISFFTNSEATNTPMAGSVSFMRALPEEVVAASYQVSREDARRIKFNNKNTFFFTPSQSERRADA.

Positions 1–21 (MAINPSLLFLSLLFLFNGCLA) are cleaved as a signal peptide. Disulfide bonds link cysteine 34–cysteine 67 and cysteine 110–cysteine 331. In terms of domain architecture, Cupin type-1 1 spans 39-273 (LRASAPQTRI…AFNVDHDIIR (235 aa)). 2 disordered regions span residues 187 to 248 (AGNP…ESSS) and 298 to 325 (PRME…QDNG). Residues 212-228 (EESEEEEGEGEEEEEED) show a composition bias toward acidic residues. Positions 299-314 (RMEEEEREERQQEQRY) are enriched in basic and acidic residues. The 150-residue stretch at 337–486 (ENLADPERAD…SYQVSREDAR (150 aa)) folds into the Cupin type-1 2 domain.

Belongs to the 11S seed storage protein (globulins) family. Hexamer; each subunit is composed of an acidic and a basic chain derived from a single precursor and linked by a disulfide bond.

This is a seed storage protein. The sequence is that of Legumin A (LEGA) from Gossypium hirsutum (Upland cotton).